Reading from the N-terminus, the 545-residue chain is Cytochrome P450 10 (545 aa).

Cysteine 493 is a binding site for heme.

Belongs to the cytochrome P450 family. Heme is required as a cofactor. In terms of tissue distribution, abundantly expressed in the female gonadotropic hormone producing dorsal bodies.

May be involved in the synthesis of the female gonadotropic hormone produced by the dorsal bodies. The sequence is that of Cytochrome P450 10 (CYP10) from Lymnaea stagnalis (Great pond snail).